Here is an 821-residue protein sequence, read N- to C-terminus: Calpain-3 (821 aa).

The tract at residues 7–37 is disordered; sequence ASVAPRTAAEPRSPGPVPHPAQSKATEAGGG. In terms of domain architecture, Calpain catalytic spans 74–417; sequence LYVDPEFPPD…FTKLEICNLT (344 aa). Active-site residues include cysteine 129, histidine 334, and asparagine 358. Residues 418 to 586 form a domain III region; the sequence is ADALQSDKLQ…KRNLSEEVEN (169 aa). The linker stretch occupies residues 587-649; that stretch reads TISVDRPVKK…QPGSSDQESE (63 aa). The segment at 609–652 is disordered; that stretch reads ANSNKELGVDQESEEGKGKTSPDKQKQSPQPQPGSSDQESEEQQ. Positions 622-634 are enriched in basic and acidic residues; that stretch reads EEGKGKTSPDKQK. Residues 635 to 645 show a composition bias toward low complexity; sequence QSPQPQPGSSD. 4 EF-hand domains span residues 649-683, 692-725, 722-757, and 787-821; these read EEQQ…VVNK, FTLE…NKIK, NKIK…AGFH, and VRLE…TMYA. The segment at 650–821 is domain IV; sequence EQQQFRNIFK…LEWLQLTMYA (172 aa). 18 residues coordinate Ca(2+): alanine 662, aspartate 665, glutamate 667, glutamate 672, aspartate 705, aspartate 707, serine 709, lysine 711, glutamate 716, aspartate 735, aspartate 737, serine 739, threonine 741, glutamate 746, aspartate 800, aspartate 802, aspartate 804, and isoleucine 806.

The protein belongs to the peptidase C2 family. Homodimer; via EF-hand domain 4. Interacts with TTN/titin. Interacts with CMYA5; this interaction, which results in CMYA5 proteolysis, may protect CAPN3 from autolysis. Interacts with SIMC1. Interacts with UTP25; the interaction is required for CAPN3 translocation to the nucleolus. In terms of tissue distribution, isoform I is skeletal muscle specific.

It localises to the cytoplasm. The protein localises to the nucleus. It is found in the nucleolus. The enzyme catalyses Broad endopeptidase activity.. With respect to regulation, activated by micromolar concentrations of calcium and inhibited by calpastatin. In terms of biological role, calcium-regulated non-lysosomal thiol-protease. Proteolytically cleaves CTBP1 at 'His-409'. Mediates, with UTP25, the proteasome-independent degradation of p53/TP53. In Homo sapiens (Human), this protein is Calpain-3.